An 84-amino-acid chain; its full sequence is Small, acid-soluble spore protein gamma-type (84 aa).

Polar residues-rich tracts occupy residues 1 to 25 (MANSNNFSKTNAQQVRKQNQQSAAG) and 34 to 44 (ASETNAQQVRK). The interval 1–84 (MANSNNFSKT…SAEQNKQQNS (84 aa)) is disordered. Repeats lie at residues 21–47 (QSAAGQGQFGTEFASETNAQQVRKQNQ) and 48–74 (QSAGQQGQFGTEFASETDAQQVRQQNQ). Composition is skewed to low complexity over residues 45–57 (QNQQSAGQQGQFG) and 71–84 (QQNQSAEQNKQQNS).

Belongs to the gamma-type SASP family.

Functionally, SASP are proteins degraded in the first minutes of spore germination and provide amino acids for both new protein synthesis and metabolism. These proteins may be involved in dormant spore's high resistance to UV light. The chain is Small, acid-soluble spore protein gamma-type (sspE) from Bacillus subtilis (strain 168).